We begin with the raw amino-acid sequence, 420 residues long: MSTFNAPKGIPEYFPPESAAFLAVRETLADAARRAGYGYIELPLFEDTTLFARGVGESTDVVSKEMYTFADRGGRSVTLRPEGTAGVTRSVIENGLDRGQLPVKLYYSGAFFRYERPQAGRYRQLQQLGVEAIGVDDPALDAEVIAIADEGYRRLGLTGYRIELTSLGDETCRPSYRAKLQEFLRGLPLDEDTRKRAELNPLRVLDDKRPEVRELLADAPLMVDHLSVEAKEHYEQVKTHLSDLGVAFTENPRLVRGLDYYTKTTFEFVHDGLGAQSGIGGGGRYDGLMAELGGQELSGVGFGLGVDRTLLACQAEGLAVGDQARCDVYCVPLGEAAKRRLVTIAGGLRGAGVRADVAYGGKSLKGAMKGADRSGARFALVLGERDLEAGSAQLKDLASGEQRPVPLDDAVAAVREALQP.

It belongs to the class-II aminoacyl-tRNA synthetase family. Homodimer.

It is found in the cytoplasm. The enzyme catalyses tRNA(His) + L-histidine + ATP = L-histidyl-tRNA(His) + AMP + diphosphate + H(+). The sequence is that of Histidine--tRNA ligase from Saccharopolyspora erythraea (strain ATCC 11635 / DSM 40517 / JCM 4748 / NBRC 13426 / NCIMB 8594 / NRRL 2338).